The sequence spans 79 residues: uncharacterized protein (79 aa).

The signal sequence occupies residues 1–33 (MRLIIRAIVLLALVWIGLLMSGYGILVGSKVNA).

This is an uncharacterized protein from Salmonella typhi.